The primary structure comprises 92 residues: MSAEVALVYRVLPDSAEVNIEKLKNDVINKLAPKYKVDKVEVEEIGFGIKALRLYIRMPESDEYSSDEIEELLRSVEGVGGYELEYFSRLSF.

It belongs to the EF-1-beta/EF-1-delta family.

Its function is as follows. Promotes the exchange of GDP for GTP in EF-1-alpha/GDP, thus allowing the regeneration of EF-1-alpha/GTP that could then be used to form the ternary complex EF-1-alpha/GTP/AAtRNA. This is Elongation factor 1-beta (ef1b) from Pyrobaculum aerophilum (strain ATCC 51768 / DSM 7523 / JCM 9630 / CIP 104966 / NBRC 100827 / IM2).